Consider the following 97-residue polypeptide: Small ribosomal subunit protein bS16c (97 aa).

It belongs to the bacterial ribosomal protein bS16 family.

The protein localises to the plastid. It localises to the chloroplast. The chain is Small ribosomal subunit protein bS16c from Piper cenocladum (Ant piper).